The primary structure comprises 55 residues: AVLYNSPNFGSRTSLSNGKNAAFAVVLLLSLLIYGSRCLSQRNHLCACGNNHSSH.

The chain crosses the membrane as a helical span at residues 20-39 (NAAFAVVLLLSLLIYGSRCL).

The protein belongs to the carlavirus/potexvirus TGB2 protein family.

It is found in the host membrane. In terms of biological role, the three proteins TGB1, TGB2 and TGB3 are required for virus movement. The chain is TGB2 protein from Potato virus X (strain Xc) (PVX).